Here is a 111-residue protein sequence, read N- to C-terminus: MDVLRSIALFVLAALLEIGGAWLVWQGVREHRGLAWIGAGVIALGLYGFAATLQPEAQFGRVLAAYGGVFVAGSLLWAAVVDGYRPDRFDVAGALVCLVGVGIVMYAPRPS.

4 helical membrane passes run 7–27, 33–53, 62–82, and 88–108; these read IALF…VWQG, GLAW…AATL, VLAA…AVVD, and RFDV…MYAP.

It belongs to the UPF0060 family.

It localises to the cell membrane. This is UPF0060 membrane protein Krad_3114 from Kineococcus radiotolerans (strain ATCC BAA-149 / DSM 14245 / SRS30216).